Reading from the N-terminus, the 721-residue chain is WD repeat and coiled-coil-containing protein (721 aa).

N-acetylmethionine is present on Met1. WD repeat units lie at residues 55–98 (GQFE…MESS) and 154–194 (NTQG…LHRC). 4 positions are modified to phosphoserine: Ser299, Ser468, Ser501, and Ser523. Residues 520–537 (QPASLPRHSSTPDHTSTL) are compositionally biased toward polar residues. Positions 520–553 (QPASLPRHSSTPDHTSTLEPPRLPQRKNLQSEKE) are disordered. Phosphothreonine is present on Thr530. Positions 539–545 (PPRLPQR) are interaction with HCK. A coiled-coil region spans residues 556-584 (QLSKEVEILSRNLVEMQRCLSELTNRLHN). A phosphoserine mark is found at Ser686 and Ser690.

In terms of assembly, oligomer. Interacts with HCK (via SH3 domain). Post-translationally, phosphorylated on Tyr when associated with HCK.

The sequence is that of WD repeat and coiled-coil-containing protein from Homo sapiens (Human).